The following is a 333-amino-acid chain: CMP-N-acetylneuraminate-beta-galactosamide-alpha-2,3-sialyltransferase 4 (333 aa).

Residues 1-8 are Cytoplasmic-facing; the sequence is MTSKSHWK. The chain crosses the membrane as a helical; Signal-anchor for type II membrane protein span at residues 9–26; the sequence is LLALALVLVVVMVWYSIS. The Lumenal segment spans residues 27 to 333; the sequence is REDRYIEFFY…MGAVKNLTYF (307 aa). 4 N-linked (GlcNAc...) asparagine glycosylation sites follow: Asn61, Asn131, Asn310, and Asn329. Cys120 and Cys273 are disulfide-bonded.

It belongs to the glycosyltransferase 29 family.

The protein resides in the golgi apparatus. It is found in the golgi stack membrane. The enzyme catalyses a beta-D-galactosyl-(1-&gt;3)-N-acetyl-beta-D-galactosaminyl derivative + CMP-N-acetyl-beta-neuraminate = an N-acetyl-alpha-neuraminyl-(2-&gt;3)-beta-D-galactosyl-(1-&gt;3)-N-acetyl-beta-D-galactosaminyl derivative + CMP + H(+). It catalyses the reaction a beta-D-galactosyl-(1-&gt;3)-N-acetyl-alpha-D-galactosaminyl derivative + CMP-N-acetyl-beta-neuraminate = an N-acetyl-alpha-neuraminyl-(2-&gt;3)-beta-D-galactosyl-(1-&gt;3)-N-acetyl-alpha-D-galactosaminyl derivative + CMP + H(+). It carries out the reaction a beta-D-galactosyl-(1-&gt;4)-N-acetyl-beta-D-glucosaminyl derivative + CMP-N-acetyl-beta-neuraminate = an N-acetyl-alpha-neuraminyl-(2-&gt;3)-beta-D-galactosyl-(1-&gt;4)-N-acetyl-beta-D-glucosaminyl derivative + CMP + H(+). The catalysed reaction is a ganglioside GM1 (d18:1(4E)) + CMP-N-acetyl-beta-neuraminate = a ganglioside GD1a (d18:1(4E)) + CMP + H(+). The enzyme catalyses a ganglioside GA1 (d18:1(4E)) + CMP-N-acetyl-beta-neuraminate = a ganglioside GM1b (d18:1(4E)) + CMP + H(+). It catalyses the reaction a ganglioside GT1c (d18:1(4E)) + CMP-N-acetyl-beta-neuraminate = a ganglioside GQ1c (d18:1(4E)) + CMP + H(+). It carries out the reaction a neolactoside nLc4Cer + CMP-N-acetyl-beta-neuraminate = a neolactoside IV(3)-alpha-NeuAc-nLc4Cer + CMP + H(+). The catalysed reaction is a neolactoside nLc4Cer(d18:1(4E)) + CMP-N-acetyl-beta-neuraminate = a neolactoside IV(3)-alpha-NeuAc-nLc4Cer(d18:1(4E)) + CMP + H(+). It participates in protein modification; protein glycosylation. It functions in the pathway glycolipid biosynthesis. Functionally, a beta-galactoside alpha2-3 sialyltransferase involved in terminal sialylation of glycoproteins and glycolipids. Catalyzes the transfer of sialic acid (N-acetyl-neuraminic acid; Neu5Ac) from the nucleotide sugar donor CMP-Neu5Ac onto acceptor Galbeta-(1-&gt;3)-GalNAc- and Galbeta-(1-&gt;4)-GlcNAc-terminated glycoconjugates through an alpha2-3 linkage. Plays a major role in hemostasis. Responsible for sialylation of plasma VWF/von Willebrand factor, preventing its recognition by asialoglycoprotein receptors (ASGPR) and subsequent clearance. Regulates ASGPR-mediated clearance of platelets. Participates in the biosynthesis of the sialyl Lewis X epitopes, both on O- and N-glycans, which are recognized by SELE/E-selectin, SELP/P-selectin and SELL/L-selectin. Essential for selectin-mediated rolling and adhesion of leukocytes during extravasation. Contributes to adhesion and transendothelial migration of neutrophils likely through terminal sialylation of CXCR2. In glycosphingolipid biosynthesis, sialylates GM1 and GA1 gangliosides to form GD1a and GM1b, respectively. Metabolizes brain c-series ganglioside GT1c forming GQ1c. Synthesizes ganglioside LM1 (IV3Neu5Ac-nLc4Cer), a major structural component of peripheral nerve myelin. This chain is CMP-N-acetylneuraminate-beta-galactosamide-alpha-2,3-sialyltransferase 4 (St3gal4), found in Rattus norvegicus (Rat).